We begin with the raw amino-acid sequence, 288 residues long: CBY1-interacting BAR domain-containing protein 2 (288 aa).

The segment at 6–217 (SRDSQVRVME…ESYDLEKDLE (212 aa)) is BAR-like. Disordered stretches follow at residues 133–157 (QKSP…VDAS) and 256–288 (TIRS…RLNQ). Over residues 138–157 (DRQTISQAETSVQRASVDAS) the composition is skewed to polar residues. The segment covering 266 to 276 (SEDDSAEEDPV) has biased composition (acidic residues).

It belongs to the CIBAR family. In terms of assembly, homodimer (via BAR-like domain). Heterodimer (via BAR-like domain) with FAM92A. Interacts with CBY1.

The protein localises to the cytoplasm. It localises to the cytoskeleton. It is found in the microtubule organizing center. The protein resides in the centrosome. Its subcellular location is the centriole. The protein localises to the cilium basal body. May play a role in ciliogenesis. In cooperation with CBY1 may facilitate ciliogenesis likely by the recruitment and fusion of endosomal vesicles at distal appendages during early stages of ciliogenesis. The protein is CBY1-interacting BAR domain-containing protein 2 (CIBAR2) of Bos taurus (Bovine).